Consider the following 447-residue polypeptide: tRNA-2-methylthio-N(6)-dimethylallyladenosine synthase (447 aa).

Positions 3–120 constitute an MTTase N-terminal domain; that stretch reads KKLYIETHGC…LPEMIDAART (118 aa). Positions 12, 49, 83, 157, 161, and 164 each coordinate [4Fe-4S] cluster. Residues 143–375 enclose the Radical SAM core domain; it reads RVDGPSAFVS…QHRINQYGFE (233 aa). The TRAM domain occupies 378-442; sequence RRMVGTVQRI…PHSLRGTLLD (65 aa).

This sequence belongs to the methylthiotransferase family. MiaB subfamily. Monomer. [4Fe-4S] cluster serves as cofactor.

Its subcellular location is the cytoplasm. It carries out the reaction N(6)-dimethylallyladenosine(37) in tRNA + (sulfur carrier)-SH + AH2 + 2 S-adenosyl-L-methionine = 2-methylsulfanyl-N(6)-dimethylallyladenosine(37) in tRNA + (sulfur carrier)-H + 5'-deoxyadenosine + L-methionine + A + S-adenosyl-L-homocysteine + 2 H(+). Catalyzes the methylthiolation of N6-(dimethylallyl)adenosine (i(6)A), leading to the formation of 2-methylthio-N6-(dimethylallyl)adenosine (ms(2)i(6)A) at position 37 in tRNAs that read codons beginning with uridine. This chain is tRNA-2-methylthio-N(6)-dimethylallyladenosine synthase, found in Ectopseudomonas mendocina (strain ymp) (Pseudomonas mendocina).